A 318-amino-acid polypeptide reads, in one-letter code: Acyl-CoA dehydrogenase IpdE2 (318 aa).

FAD-binding residues include Arg-210 and Gly-277.

The protein belongs to the acyl-CoA dehydrogenase family. In terms of assembly, heterotetramer composed of 2 IpdE1 subunits and 2 IpdE2 subunits. FAD is required as a cofactor.

It carries out the reaction 3-[(3aS,4S,5R,7aS)-5-hydroxy-7a-methyl-1-oxo-octahydro-1H-inden-4-yl]propanoyl-CoA + A = (2E)-3-[(3aS,4S,5R,7aS)-5-hydroxy-7a-methyl-1-oxo-octahydro-1H-inden-4-yl]prop-2-enoyl-CoA + AH2. The protein operates within steroid metabolism; cholesterol degradation. Its function is as follows. Involved in cholesterol degradation. Catalyzes the dehydrogenation of 5OH-HIP-CoA to 5OH-HIPE-CoA. Can also use octanoyl-CoA and dihydroferuloyl-CoA, with lower efficiency. Cannot use 3-oxo-4-pregnene-20-carboxyl-CoA (3-OPC-CoA). This Mycobacterium tuberculosis (strain ATCC 25618 / H37Rv) protein is Acyl-CoA dehydrogenase IpdE2.